The following is an 81-amino-acid chain: Styelin-D (81 aa).

The N-terminal stretch at 1-22 is a signal peptide; it reads MQMKATILIVLVALFMIQQSEA. Trp-24 bears the 6'-bromotryptophan mark. The residue at position 26 (Arg-26) is a 3,4-dihydroxyarginine. Lys-27, Lys-30, and Lys-34 each carry 4,5-dihydroxylysine. 3',4'-dihydroxyphenylalanine occurs at positions 36 and 37. At Lys-38 the chain carries 4,5-dihydroxylysine. Position 40 is a 5-hydroxylysine (Lys-40). A 3',4'-dihydroxyphenylalanine mark is found at Tyr-41 and Tyr-42. Position 44 is a 5-hydroxylysine (Lys-44). Leu-54 is modified (leucine amide). Positions 56–81 are cleaved as a propeptide — removed in mature form; sequence DMTDEEFQDFMKEVEQAREEELQSRQ.

In terms of processing, contains L-DOPA (3',4'-dihydroxyphenylalanine). Hemocytes and pharyngeal tissues.

The protein localises to the secreted. Its function is as follows. Bactericidal against several Gram-positive and Gram-negative bacteria. Plays a significant role in the innate immune mechanisms of S.clava. This is Styelin-D from Styela clava (Sea squirt).